Here is a 151-residue protein sequence, read N- to C-terminus: MAAPQEARREPIQAVQVFGRKKTATAVAYCKRGHGVLRVNGRPLDLVEPRLLQYKLQEPILLLGKEKFSGVDIRVTVKGGGHVAQVYAIRQAISKALIAFYQKYVDEASKKEIKDILVQYDRSLLVADPRRCEPKKFGGPGARARYQKSYR.

The protein belongs to the universal ribosomal protein uS9 family.

This is Small ribosomal subunit protein uS9 (RpS16) from Spodoptera frugiperda (Fall armyworm).